We begin with the raw amino-acid sequence, 379 residues long: Cytochrome b (379 aa).

A run of 4 helical transmembrane segments spans residues 33-53 (FGSL…FLAM), 77-98 (WLIR…FIHV), 113-133 (WNIG…GYVL), and 178-198 (FFAF…VHLL). Residues H83 and H97 each coordinate heme b. Residues H182 and H196 each contribute to the heme b site. A ubiquinone is bound at residue H201. 4 helical membrane passes run 226-246 (IKDL…ALFF), 288-308 (LGGV…PLLN), 320-340 (ITQT…WIGG), and 347-367 (FTTI…ILMP).

Belongs to the cytochrome b family. As to quaternary structure, the cytochrome bc1 complex contains 11 subunits: 3 respiratory subunits (MT-CYB, CYC1 and UQCRFS1), 2 core proteins (UQCRC1 and UQCRC2) and 6 low-molecular weight proteins (UQCRH/QCR6, UQCRB/QCR7, UQCRQ/QCR8, UQCR10/QCR9, UQCR11/QCR10 and a cleavage product of UQCRFS1). This cytochrome bc1 complex then forms a dimer. Requires heme b as cofactor.

It is found in the mitochondrion inner membrane. In terms of biological role, component of the ubiquinol-cytochrome c reductase complex (complex III or cytochrome b-c1 complex) that is part of the mitochondrial respiratory chain. The b-c1 complex mediates electron transfer from ubiquinol to cytochrome c. Contributes to the generation of a proton gradient across the mitochondrial membrane that is then used for ATP synthesis. The chain is Cytochrome b (MT-CYB) from Akodon aerosus (Highland grass mouse).